We begin with the raw amino-acid sequence, 91 residues long: Small ribosomal subunit protein uS15c (91 aa).

This sequence belongs to the universal ribosomal protein uS15 family. Part of the 30S ribosomal subunit.

The protein localises to the plastid. It is found in the chloroplast. The sequence is that of Small ribosomal subunit protein uS15c (rps15) from Ceratophyllum demersum (Rigid hornwort).